The following is a 1034-amino-acid chain: Phosphoenolpyruvate carboxylase (1034 aa).

Residues His203 and Lys680 contribute to the active site.

The protein belongs to the PEPCase type 1 family. Mg(2+) is required as a cofactor.

It carries out the reaction oxaloacetate + phosphate = phosphoenolpyruvate + hydrogencarbonate. Forms oxaloacetate, a four-carbon dicarboxylic acid source for the tricarboxylic acid cycle. In Synechocystis sp. (strain ATCC 27184 / PCC 6803 / Kazusa), this protein is Phosphoenolpyruvate carboxylase (ppc).